Here is a 406-residue protein sequence, read N- to C-terminus: Oligouridylate-binding protein 1 (406 aa).

2 consecutive RRM domains span residues arginine 49–alanine 123 and tyrosine 134–lysine 212. The interval threonine 231–asparagine 250 is disordered. In terms of domain architecture, RRM 3 spans threonine 255–lysine 329.

It is found in the nucleus. Functionally, heterogeneous nuclear ribonucleoprotein (hnRNP)-like protein that acts as a component of the pre-mRNA processing machinery. Functions to facilitate the nuclear maturation of plant pre-mRNAs. Binds with high affinity to RNA molecules that contain AU-rich regions. May bind to the 3'-UTR and protects the mRNA against exonucleolytic degradation. Associates with nuclear poly(A)+ RNA in nucleus in vivo. Does not stimulate transcription or the 3' end cleavage/polyadenylation reaction. This Nicotiana plumbaginifolia (Leadwort-leaved tobacco) protein is Oligouridylate-binding protein 1 (UBP1).